A 171-amino-acid chain; its full sequence is tRNA-specific adenosine deaminase (171 aa).

The 128-residue stretch at 6–133 (EEQTYFMQEA…ERLNHRVQVE (128 aa)) folds into the CMP/dCMP-type deaminase domain. Histidine 57 lines the Zn(2+) pocket. Residue glutamate 59 is the Proton donor of the active site. Zn(2+) contacts are provided by cysteine 87 and cysteine 90.

The protein belongs to the cytidine and deoxycytidylate deaminase family. As to quaternary structure, homodimer. Requires Zn(2+) as cofactor.

The enzyme catalyses adenosine(34) in tRNA + H2O + H(+) = inosine(34) in tRNA + NH4(+). Functionally, catalyzes the deamination of adenosine to inosine at the wobble position 34 of tRNA(Arg2). This is tRNA-specific adenosine deaminase from Streptococcus pyogenes serotype M3 (strain ATCC BAA-595 / MGAS315).